We begin with the raw amino-acid sequence, 595 residues long: Proline--tRNA ligase (595 aa).

A disordered region spans residues 1–22 (MKMSTMFGATLHTAPGRSESEG).

It belongs to the class-II aminoacyl-tRNA synthetase family. ProS type 1 subfamily. In terms of assembly, homodimer.

Its subcellular location is the cytoplasm. It carries out the reaction tRNA(Pro) + L-proline + ATP = L-prolyl-tRNA(Pro) + AMP + diphosphate. Catalyzes the attachment of proline to tRNA(Pro) in a two-step reaction: proline is first activated by ATP to form Pro-AMP and then transferred to the acceptor end of tRNA(Pro). As ProRS can inadvertently accommodate and process non-cognate amino acids such as alanine and cysteine, to avoid such errors it has two additional distinct editing activities against alanine. One activity is designated as 'pretransfer' editing and involves the tRNA(Pro)-independent hydrolysis of activated Ala-AMP. The other activity is designated 'posttransfer' editing and involves deacylation of mischarged Ala-tRNA(Pro). The misacylated Cys-tRNA(Pro) is not edited by ProRS. This is Proline--tRNA ligase from Salinispora tropica (strain ATCC BAA-916 / DSM 44818 / JCM 13857 / NBRC 105044 / CNB-440).